A 408-amino-acid polypeptide reads, in one-letter code: Peptidase T (408 aa).

His78 contacts Zn(2+). Residue Asp80 is part of the active site. Asp140 is a binding site for Zn(2+). Residue Glu174 is the Proton acceptor of the active site. The Zn(2+) site is built by Glu175, Asp197, and His379.

The protein belongs to the peptidase M20B family. Requires Zn(2+) as cofactor.

The protein resides in the cytoplasm. The enzyme catalyses Release of the N-terminal residue from a tripeptide.. Its function is as follows. Cleaves the N-terminal amino acid of tripeptides. This chain is Peptidase T, found in Staphylococcus aureus (strain bovine RF122 / ET3-1).